We begin with the raw amino-acid sequence, 49 residues long: Large ribosomal subunit protein bL33A (49 aa).

The protein belongs to the bacterial ribosomal protein bL33 family.

This is Large ribosomal subunit protein bL33A from Bacillus licheniformis (strain ATCC 14580 / DSM 13 / JCM 2505 / CCUG 7422 / NBRC 12200 / NCIMB 9375 / NCTC 10341 / NRRL NRS-1264 / Gibson 46).